Reading from the N-terminus, the 313-residue chain is Type I restriction enzyme EcoprrI endonuclease subunit (313 aa).

The protein belongs to the HsdR family. In terms of assembly, the type I restriction/modification system is composed of three polypeptides R, M and S; the restriction enzyme has stoichiometry R(2)M(2)S(1) while the methyltransferase is M(2)S(1).

The enzyme catalyses Endonucleolytic cleavage of DNA to give random double-stranded fragments with terminal 5'-phosphates, ATP is simultaneously hydrolyzed.. The subtype C restriction (R) subunit of a type I restriction enzyme that recognizes 5'-CCAN(7)RTGC-3' and cleaves a random distance away. The R subunit is required for both endonuclease and ATPase activities but not for modification. Cleaves only non-methylated DNA, hemi-methylated and fully methylated DNA are not substrates. After locating a non-methylated recognition site, the enzyme complex serves as a molecular motor that translocates DNA in an ATP-dependent manner until a collision occurs that triggers cleavage. The prr locus restricts phage T4 mutants lacking polynucleotide kinase or RNA ligase; T4 mutants lacking these genes manifest a T4-induced anticodon nuclease (ACNase). This is a putative 'masking-agent' for the ACNase encoded by prrC. It is thought that Stp and other T4-encoded ACNase factors counteract the masking agents, thus activating the latent ACNase. The sequence is that of Type I restriction enzyme EcoprrI endonuclease subunit from Escherichia coli.